Reading from the N-terminus, the 940-residue chain is Protein translocase subunit SecA (940 aa).

ATP is bound by residues Q86, 104 to 108, and D494; that span reads GEGKT. The tract at residues 884–940 is disordered; the sequence is ATAKAQKDQQAEDAVLVGEDEPETPQGPPARGAFGQPTGASSAPQNREERRKADRRK. Residues 929 to 940 show a composition bias toward basic and acidic residues; sequence NREERRKADRRK.

This sequence belongs to the SecA family. In terms of assembly, monomer and homodimer. Part of the essential Sec protein translocation apparatus which comprises SecA, SecYEG and auxiliary proteins SecDF. Other proteins may also be involved.

The protein localises to the cell membrane. It localises to the cytoplasm. The catalysed reaction is ATP + H2O + cellular proteinSide 1 = ADP + phosphate + cellular proteinSide 2.. In terms of biological role, part of the Sec protein translocase complex. Interacts with the SecYEG preprotein conducting channel. Has a central role in coupling the hydrolysis of ATP to the transfer of proteins into and across the cell membrane, serving as an ATP-driven molecular motor driving the stepwise translocation of polypeptide chains across the membrane. The sequence is that of Protein translocase subunit SecA from Clavibacter sepedonicus (Clavibacter michiganensis subsp. sepedonicus).